Here is a 491-residue protein sequence, read N- to C-terminus: Ran-binding protein 3-like (491 aa).

Residues 270–441 (TFKSVLKFPN…VALRSLAKQG (172 aa)) enclose the RanBD1 domain. Residues 440 to 468 (QGDGGPAESQSDTALPQLNGESCDEDEDE) form a disordered region. Residues 447–459 (ESQSDTALPQLNG) show a composition bias toward polar residues.

In terms of assembly, interacts with SMAD1, SMAD5 and SMAD8.

The protein resides in the nucleus. The protein localises to the cytoplasm. Functionally, nuclear export factor for BMP-specific SMAD1/5/8 that plays a critical role in terminating BMP signaling and regulating mesenchymal stem cell differentiation by blocking osteoblast differentiation to promote myogenic differention. Directly recognizes dephosphorylated SMAD1/5/8 and mediates their nuclear export in a Ran-dependent manner. This is Ran-binding protein 3-like (Ranbp3l) from Mus musculus (Mouse).